The chain runs to 502 residues: MPKTEETVLQNDPSVAENGAPEPKTPGQSQKSKSFCLDDQSPDLIETVNEVSKLSISHEIVVNQDFYVEETILPPNSVEGRFAEAMYNAFWNHLKEQLLSTPPDFTCALELLKDVKETLLSLLLPWQNRLRNEIEEALDTDLLKQEAEHGALDVPHLSNYILNLMALLCAPVRDEAIQKLETIRDPVQLLRGILRVLGLMKMDMVNYTIQSFRPYLQEHSIQYEQAKFQELLDKQPSLLDYTTKWLTKAATDITTLCPSSPDSPSSSCSMACSLPSGAGNNSEPPSPTMVLYQGYLNLLLWDLENVEFPETLLMDRIRLQELAFQLHQLTVLASVLLVARSFSGEVLFRSPEFVDRLKCTTKALTEEFISRPEETMLSVSEQVSQEVHQGLKDMGLTTLSSENTASLLGQLQNITKKENCIRSIVDQWIRFFLKCCLLHGMQESLLHFPGGLILIEKELAELGWKFLNLMHHNQQVFGPYYAEILKHIIHPAQAQETDVEPN.

A disordered region spans residues methionine 1–cysteine 36.

This sequence belongs to the TCP11 family.

In Homo sapiens (Human), this protein is T-complex protein 11-like X-linked protein 2.